The chain runs to 137 residues: Small ribosomal subunit protein uS9 (137 aa).

The interval Leu105–Arg137 is disordered. A compositionally biased stretch (basic residues) spans Lys118–Arg137.

It belongs to the universal ribosomal protein uS9 family.

The chain is Small ribosomal subunit protein uS9 (rpsI) from Synechocystis sp. (strain ATCC 27184 / PCC 6803 / Kazusa).